Consider the following 203-residue polypeptide: Nudix hydrolase 12, mitochondrial (203 aa).

Residues 18–166 (NFRLVSGCIP…WMQRALEEFL (149 aa)) form the Nudix hydrolase domain. The Nudix box motif lies at 66–87 (GGWEDDETVLEAASREAIEEAG). The Mg(2+) site is built by E81 and E85.

Belongs to the Nudix hydrolase family. Mg(2+) serves as cofactor. Requires Mn(2+) as cofactor. In terms of tissue distribution, expressed in roots, leaves, stems and inflorescences.

It is found in the mitochondrion. Functionally, probably mediates the hydrolysis of some nucleoside diphosphate derivatives. The chain is Nudix hydrolase 12, mitochondrial (NUDT12) from Arabidopsis thaliana (Mouse-ear cress).